We begin with the raw amino-acid sequence, 516 residues long: Adenosine deaminase (516 aa).

A signal peptide spans 1–20 (MFPRLIVWLLAASAVHAVLD).

The protein belongs to the metallo-dependent hydrolases superfamily. Adenosine and AMP deaminases family. ADGF subfamily. The cofactor is Zn(2+). In terms of tissue distribution, salivary gland (at protein level).

It is found in the secreted. The enzyme catalyses adenosine + H2O + H(+) = inosine + NH4(+). Catalyzes the deamination of adenosine to inosine. The sequence is that of Adenosine deaminase from Phlebotomus duboscqi (Sandfly).